The chain runs to 441 residues: DNA double-strand break repair protein Mre11 (441 aa).

Residues Asp-9, His-11, Asp-50, and Asn-85 each coordinate Mn(2+). His-86 serves as the catalytic Proton donor. Mn(2+)-binding residues include His-150, Asp-181, and His-183. Residues 360-441 (ESLLSDDPDA…SRDSSLGDFA (82 aa)) are disordered. Composition is skewed to acidic residues over residues 379 to 403 (AEAE…EDTA) and 411 to 425 (TDTD…DSET).

This sequence belongs to the MRE11/RAD32 family. As to quaternary structure, homodimer. Forms a heterotetramer composed of two Mre11 subunits and two Rad50 subunits. Requires Mn(2+) as cofactor.

Its activity is regulated as follows. Nuclease activity is regulated by Rad50. Its function is as follows. Part of the Rad50/Mre11 complex, which is involved in the early steps of DNA double-strand break (DSB) repair. Mre11 binds to DSB ends and has both double-stranded 3'-5' exonuclease activity and single-stranded endonuclease activity. In polyploid organisms, the Rad50/Mre11 complex appears to restrain the repair of double-strand breaks by homologous recombination, allowing another pathway to act as the primary mode of repair. The sequence is that of DNA double-strand break repair protein Mre11 from Haloferax volcanii (strain ATCC 29605 / DSM 3757 / JCM 8879 / NBRC 14742 / NCIMB 2012 / VKM B-1768 / DS2) (Halobacterium volcanii).